The chain runs to 241 residues: Agamous-like MADS-box protein AP1 (241 aa).

The 61-residue stretch at 1–61 folds into the MADS-box domain; that stretch reads MGRGRVQLKR…GKLFEYSTDS (61 aa). In terms of domain architecture, K-box spans 88–178; sequence QGNWSLEYSK…AKEIKEKEKT (91 aa).

In terms of tissue distribution, expressed in tendrils and flowers.

It localises to the nucleus. Probable transcription factor involved in flower development. This chain is Agamous-like MADS-box protein AP1, found in Vitis vinifera (Grape).